The chain runs to 662 residues: Transforming growth factor beta activator LRRC32 (662 aa).

A signal peptide spans 1 to 17 (MRPQILLLLALLTLGLA). The Extracellular portion of the chain corresponds to 18–625 (AQRQDKVPCK…EDCEKGGLKN (608 aa)). Residues 21–48 (QDKVPCKMVDKKVSCQGLGLLQVPSVLP) form the LRRNT domain. LRR repeat units follow at residues 50–73 (DTET…GFYT), 74–95 (ALRH…AFQA), 98–119 (HLEH…SAGG), 125–145 (RVTS…ERLL), 150–171 (SLHT…TFRD), 174–195 (VLEQ…AFEG), 198–219 (RLTH…SLQQ), 220–240 (LRVL…SQPQ), 244–265 (QLTW…AALP), and 266–286 (RLIY…PPQD). The N-linked (GlcNAc...) asparagine glycan is linked to Asn-203. 2 N-linked (GlcNAc...) asparagine glycosylation sites follow: Asn-271 and Asn-308. LRR repeat units lie at residues 316 to 339 (QLLN…EHLT), 340 to 361 (SLCF…RSGS), 364 to 385 (CLML…ARAL), 387 to 408 (SLRT…TFAN), 411 to 432 (SLQR…DEPG), 444 to 465 (SLHS…AFLH), 467 to 488 (PLTE…ALGG), 492 to 513 (SLEV…LPCF), 515 to 536 (CLKR…TQAV), and 537 to 558 (SLEV…AMGG). Asn-345 is a glycosylation site (N-linked (GlcNAc...) asparagine). N-linked (GlcNAc...) asparagine glycosylation occurs at Asn-545. One can recognise an LRRCT domain in the interval 571–620 (NPLSCCGNGWLAAQLHQGRVDVDATQDLICRFSSQEEVSLSHVRPEDCEK). Residues 626–646 (INLIIILTFILVSAILLTTLA) traverse the membrane as a helical segment. Over 647–662 (TCCCVRRQKFNQQYKA) the chain is Cytoplasmic.

Belongs to the LRRC32/LRRC33 family. As to quaternary structure, interacts with TGFB1; associates via disulfide bonds with the Latency-associated peptide chain (LAP) regulatory chain of TGFB1, leading to regulate activation of TGF-beta-1. Interacts with TGFB2. Interacts with TGFB3; associates via disulfide bonds with the Latency-associated peptide chain (LAP) regulatory chain of TGFB3, leading to regulate activation of TGF-beta-3. Interacts with LAPTM4B; decreases TGFB1 production in regulatory T-cells.

The protein resides in the cell membrane. It is found in the cell surface. Functionally, key regulator of transforming growth factor beta (TGFB1, TGFB2 and TGFB3) that controls TGF-beta activation by maintaining it in a latent state during storage in extracellular space. Associates specifically via disulfide bonds with the Latency-associated peptide (LAP), which is the regulatory chain of TGF-beta, and regulates integrin-dependent activation of TGF-beta. Able to outcompete LTBP1 for binding to LAP regulatory chain of TGF-beta. Controls activation of TGF-beta-1 (TGFB1) on the surface of activated regulatory T-cells (Tregs). Required for epithelial fusion during palate development by regulating activation of TGF-beta-3 (TGFB3). This Pongo abelii (Sumatran orangutan) protein is Transforming growth factor beta activator LRRC32.